The chain runs to 133 residues: Crossover junction endodeoxyribonuclease Hjc (133 aa).

Residue Glu-12 coordinates Mg(2+). Ser-32 is a catalytic residue. Mg(2+) contacts are provided by Asp-36 and Glu-49.

This sequence belongs to the Holliday junction resolvase Hjc family. As to quaternary structure, homodimer. It depends on Mg(2+) as a cofactor.

The catalysed reaction is Endonucleolytic cleavage at a junction such as a reciprocal single-stranded crossover between two homologous DNA duplexes (Holliday junction).. A structure-specific endonuclease that resolves Holliday junction (HJ) intermediates during genetic recombination. Cleaves 4-way DNA junctions introducing paired nicks in opposing strands, leaving a 5'-terminal phosphate and a 3'-terminal hydroxyl group that are subsequently ligated to produce recombinant products. The chain is Crossover junction endodeoxyribonuclease Hjc from Methanocaldococcus jannaschii (strain ATCC 43067 / DSM 2661 / JAL-1 / JCM 10045 / NBRC 100440) (Methanococcus jannaschii).